Consider the following 934-residue polypeptide: AP-2 complex subunit alpha (934 aa).

Residues 623–670 (RVPENAEIRETKSPVPNSHNNAHSNAQTNHTSSANNANASSDLLGLST) form a disordered region. Positions 636–645 (PVPNSHNNAH) are enriched in polar residues. The segment covering 646 to 663 (SNAQTNHTSSANNANASS) has biased composition (low complexity).

The protein belongs to the adapter complexes large subunit family. Adaptor protein complex 2 (AP-2) is a heterotetramer composed of two large adaptins (alpha-type and beta-type subunits), a medium adaptin (mu-type subunit AP50) and a small adaptin (sigma-type subunit AP17).

It localises to the cell membrane. It is found in the membrane. The protein resides in the coated pit. Its function is as follows. Adaptins are components of the adapter complexes which link clathrin to receptors in coated vesicles. Clathrin-associated protein complexes are believed to interact with the cytoplasmic tails of membrane proteins, leading to their selection and concentration. Alpha adaptin is a subunit of the plasma membrane adapter. This chain is AP-2 complex subunit alpha, found in Anopheles gambiae (African malaria mosquito).